Reading from the N-terminus, the 262-residue chain is GTP cyclohydrolase 1 type 2 homolog (262 aa).

Residues H64, H65, D103, H224, and E228 each contribute to the a divalent metal cation site.

This sequence belongs to the GTP cyclohydrolase I type 2/NIF3 family. In terms of assembly, homohexamer.

The protein is GTP cyclohydrolase 1 type 2 homolog of Clostridium perfringens (strain 13 / Type A).